We begin with the raw amino-acid sequence, 174 residues long: NADH-ubiquinone oxidoreductase chain 6 (174 aa).

4 helical membrane-spanning segments follow: residues 24–44 (LALG…SGLM), 53–73 (ILFL…TSLA), 82–102 (IKLT…SMIL), and 143–163 (FVTI…VKIT).

Belongs to the complex I subunit 6 family.

It is found in the mitochondrion membrane. It catalyses the reaction a ubiquinone + NADH + 5 H(+)(in) = a ubiquinol + NAD(+) + 4 H(+)(out). In terms of biological role, core subunit of the mitochondrial membrane respiratory chain NADH dehydrogenase (Complex I) that is believed to belong to the minimal assembly required for catalysis. Complex I functions in the transfer of electrons from NADH to the respiratory chain. The immediate electron acceptor for the enzyme is believed to be ubiquinone. The chain is NADH-ubiquinone oxidoreductase chain 6 (mt:ND6) from Drosophila yakuba (Fruit fly).